A 344-amino-acid chain; its full sequence is Adenosine deaminase (344 aa).

Positions 14 and 16 each coordinate Zn(2+). Histidine 16, aspartate 18, and glycine 177 together coordinate substrate. Zn(2+) is bound at residue histidine 204. The Proton donor role is filled by glutamate 207. Zn(2+) is bound at residue aspartate 284.

This sequence belongs to the metallo-dependent hydrolases superfamily. Adenosine and AMP deaminases family. Adenosine deaminase subfamily. Zn(2+) is required as a cofactor.

It catalyses the reaction adenosine + H2O + H(+) = inosine + NH4(+). It carries out the reaction 2'-deoxyadenosine + H2O + H(+) = 2'-deoxyinosine + NH4(+). In terms of biological role, catalyzes the hydrolytic deamination of adenosine and 2-deoxyadenosine. This is Adenosine deaminase from Haemophilus ducreyi (strain 35000HP / ATCC 700724).